Here is an 83-residue protein sequence, read N- to C-terminus: Greglin (83 aa).

Phosphoserine occurs at positions 8, 11, and 15. 4 cysteine pairs are disulfide-bonded: cysteine 21–cysteine 55, cysteine 25–cysteine 48, cysteine 33–cysteine 69, and cysteine 53–cysteine 76.

In terms of biological role, serine protease inhibitor. Inhibits porcine pancreatic elastase with a Ki of 58.3 nM, human neutrophil elastase with a Ki of 3.6 nM, cathepsin G with a Ki of 153.5 nM, chymotrypsin with a Ki of 26.7 nM and subtilisin with a Ki of 0.68 nM. Does not inhibit neutrophil protease 3 or pancreatic trypsin. The chain is Greglin from Schistocerca gregaria (Desert locust).